A 279-amino-acid chain; its full sequence is MAIRKLGPVTPASRYLSYSKFEEVTKSTPEKSLLAPLKKSGGRNRAGRITSRHKGGGHKRFYRIIDFKRSKDNIPAKVAAIEYDPNRSSRIALLHYADGEKRYILAPKGLKVGDVLHSGDKVDIKVGNSMPLKNIPLGADVHNIELKQGKGGQMARSAGAFATLAAKEGDHATLKLPSGEIRKVRIECRATIGGIGNDDHENIVLGKAGRSRWLGIRPQTRGMAMNPVDHPMGGGEGRSKSGGGRKHPKSPWGQLAKGLKTRNKKKASSKLIVRGRKAK.

Disordered stretches follow at residues 34–55 (LAPL…RHKG) and 221–279 (RGMA…RKAK). The span at 40–55 (SGGRNRAGRITSRHKG) shows a compositional bias: basic residues. Gly residues predominate over residues 232 to 242 (MGGGEGRSKSG). Positions 259–279 (LKTRNKKKASSKLIVRGRKAK) are enriched in basic residues.

Belongs to the universal ribosomal protein uL2 family. In terms of assembly, part of the 50S ribosomal subunit. Forms a bridge to the 30S subunit in the 70S ribosome.

Functionally, one of the primary rRNA binding proteins. Required for association of the 30S and 50S subunits to form the 70S ribosome, for tRNA binding and peptide bond formation. It has been suggested to have peptidyltransferase activity; this is somewhat controversial. Makes several contacts with the 16S rRNA in the 70S ribosome. The sequence is that of Large ribosomal subunit protein uL2 from Chlorobium phaeobacteroides (strain BS1).